Consider the following 219-residue polypeptide: Ras-related protein Rab-3B (219 aa).

Ala2 carries the post-translational modification N-acetylalanine. GTP is bound by residues Ser31, Ser32, Val33, Gly34, Lys35, Thr36, Ser37, Pro49, and Ser53. Thr36 serves as a coordination point for Mg(2+). The Switch 1 motif lies at 45 to 58 (DTFTPAFVSTVGID). 2 residues coordinate Mg(2+): Thr54 and Asp77. The short motif at 78 to 96 (TAGQERYRTITTAYYRGAM) is the Switch 2 element. A GTP-binding site is contributed by Gly80. At Thr86 the chain carries Phosphothreonine. Residues Asn135, Lys136, Asp138, Ala166, and Lys167 each coordinate GTP. Phosphoserine occurs at positions 188 and 190. Residues Cys217 and Cys219 are each lipidated (S-geranylgeranyl cysteine). The residue at position 219 (Cys219) is a Cysteine methyl ester.

It belongs to the small GTPase superfamily. Rab family. In terms of assembly, interacts with RIMS1, RIMS2, RPH3A and RPH3AL. The GTP-bound form interacts with GAS8/DRC4 (via coiled-coil domains). Interacts with GDI2, CHM and CHML; phosphorylation at Thr-86 disrupts these interactions. Interacts with MADD (via uDENN domain); the GTP-bound form is preferred for interaction. The cofactor is Mg(2+). Post-translationally, phosphorylation of Thr-86 in the switch II region by LRRK2 prevents the association of RAB regulatory proteins, including CHM, CHML and RAB GDP dissociation inhibitor GDI2.

The protein resides in the cell membrane. It is found in the golgi apparatus. It carries out the reaction GTP + H2O = GDP + phosphate + H(+). Regulated by guanine nucleotide exchange factors (GEFs) which promote the exchange of bound GDP for free GTP. Regulated by GTPase activating proteins (GAPs) which increase the GTP hydrolysis activity. Inhibited by GDP dissociation inhibitors (GDIs) which prevent Rab-GDP dissociation. Its function is as follows. The small GTPases Rab are key regulators of intracellular membrane trafficking, from the formation of transport vesicles to their fusion with membranes. Rabs cycle between an inactive GDP-bound form and an active GTP-bound form that is able to recruit to membranes different sets of downstream effectors directly responsible for vesicle formation, movement, tethering and fusion. This Mesocricetus auratus (Golden hamster) protein is Ras-related protein Rab-3B (RAB3B).